The chain runs to 586 residues: Aspartate--tRNA(Asp/Asn) ligase (586 aa).

E172 lines the L-aspartate pocket. The interval 196–199 (QLYK) is aspartate. Position 218 (R218) interacts with L-aspartate. ATP is bound by residues 218–220 (RDE) and Q227. H446 is a binding site for L-aspartate. Residue E480 participates in ATP binding. An L-aspartate-binding site is contributed by R487. 532–535 (GIDR) lines the ATP pocket.

Belongs to the class-II aminoacyl-tRNA synthetase family. Type 1 subfamily. Homodimer.

It is found in the cytoplasm. The catalysed reaction is tRNA(Asx) + L-aspartate + ATP = L-aspartyl-tRNA(Asx) + AMP + diphosphate. In terms of biological role, aspartyl-tRNA synthetase with relaxed tRNA specificity since it is able to aspartylate not only its cognate tRNA(Asp) but also tRNA(Asn). Reaction proceeds in two steps: L-aspartate is first activated by ATP to form Asp-AMP and then transferred to the acceptor end of tRNA(Asp/Asn). The sequence is that of Aspartate--tRNA(Asp/Asn) ligase from Borreliella afzelii (strain PKo) (Borrelia afzelii).